A 232-amino-acid polypeptide reads, in one-letter code: Enolase-phosphatase E1 (232 aa).

The protein belongs to the HAD-like hydrolase superfamily. MasA/MtnC family. Monomer. Mg(2+) is required as a cofactor.

The enzyme catalyses 5-methylsulfanyl-2,3-dioxopentyl phosphate + H2O = 1,2-dihydroxy-5-(methylsulfanyl)pent-1-en-3-one + phosphate. It participates in amino-acid biosynthesis; L-methionine biosynthesis via salvage pathway; L-methionine from S-methyl-5-thio-alpha-D-ribose 1-phosphate: step 3/6. The protein operates within amino-acid biosynthesis; L-methionine biosynthesis via salvage pathway; L-methionine from S-methyl-5-thio-alpha-D-ribose 1-phosphate: step 4/6. In terms of biological role, bifunctional enzyme that catalyzes the enolization of 2,3-diketo-5-methylthiopentyl-1-phosphate (DK-MTP-1-P) into the intermediate 2-hydroxy-3-keto-5-methylthiopentenyl-1-phosphate (HK-MTPenyl-1-P), which is then dephosphorylated to form the acireductone 1,2-dihydroxy-3-keto-5-methylthiopentene (DHK-MTPene). The polypeptide is Enolase-phosphatase E1 (Xanthomonas euvesicatoria pv. vesicatoria (strain 85-10) (Xanthomonas campestris pv. vesicatoria)).